Reading from the N-terminus, the 322-residue chain is GTP 3',8-cyclase (322 aa).

Residues 5 to 217 (SYGRVIDYLR…NIIAQKYSFK (213 aa)) form the Radical SAM core domain. Arg-14 lines the GTP pocket. Residues Cys-21 and Cys-25 each contribute to the [4Fe-4S] cluster site. An S-adenosyl-L-methionine-binding site is contributed by Tyr-27. Cys-28 contacts [4Fe-4S] cluster. A GTP-binding site is contributed by Arg-64. An S-adenosyl-L-methionine-binding site is contributed by Gly-68. GTP is bound at residue Thr-95. Ser-119 contacts S-adenosyl-L-methionine. Residue Lys-155 coordinates GTP. Met-189 is a binding site for S-adenosyl-L-methionine. [4Fe-4S] cluster-binding residues include Cys-249 and Cys-252. 254 to 256 (RIR) contacts GTP. Cys-266 serves as a coordination point for [4Fe-4S] cluster.

Belongs to the radical SAM superfamily. MoaA family. Monomer and homodimer. [4Fe-4S] cluster is required as a cofactor.

It catalyses the reaction GTP + AH2 + S-adenosyl-L-methionine = (8S)-3',8-cyclo-7,8-dihydroguanosine 5'-triphosphate + 5'-deoxyadenosine + L-methionine + A + H(+). The protein operates within cofactor biosynthesis; molybdopterin biosynthesis. In terms of biological role, catalyzes the cyclization of GTP to (8S)-3',8-cyclo-7,8-dihydroguanosine 5'-triphosphate. The sequence is that of GTP 3',8-cyclase from Campylobacter lari (strain RM2100 / D67 / ATCC BAA-1060).